The primary structure comprises 139 residues: MLSEETIRVIKSTVPLLKEHGTEITARMYELLFSKYPKTKELFAGASEEQPKKLANAIIAYATYIDRLEELDNAISTIARSHVRRNVKPEHYPLVKECLLQAIEEVLNPGEEVLKAWEEAYDFLAKTLITLEKKLYSQP.

The 133-residue stretch at 1-133 folds into the Globin domain; sequence MLSEETIRVI…LAKTLITLEK (133 aa).

The protein belongs to the globin family.

This is an uncharacterized protein from Aquifex aeolicus (strain VF5).